The primary structure comprises 70 residues: U2-agatoxin-Ao1n (70 aa).

The signal sequence occupies residues 1–20 (MRAIISLLLISAMVFYIIAA). Positions 21–34 (VPEEEGLQLSEDER) are excised as a propeptide. 3 cysteine pairs are disulfide-bonded: Cys-37/Cys-53, Cys-44/Cys-58, and Cys-52/Cys-68. Leu-69 carries the leucine amide modification.

The protein belongs to the neurotoxin 01 (U2-agtx) family. In terms of tissue distribution, expressed by the venom gland.

Its subcellular location is the secreted. Functionally, insect active toxin causing rapid but reversible paralysis in crickets. No activity shown in mammals. Does not show effect on mammalian voltage-gated calcium channels. The chain is U2-agatoxin-Ao1n from Agelena orientalis (Funnel-web spider).